Reading from the N-terminus, the 798-residue chain is Gelsolin (798 aa).

The first 28 residues, 1–28, serve as a signal peptide directing secretion; that stretch reads MDASGAATMAVLSSLLVFLALSSSLCSA. The actin-severing stretch occupies residues 57–181; it reads RVMHPSFANA…YEQGGVGTGF (125 aa). A Gelsolin-like 1 repeat occupies 78-131; sequence ENFEPVIYPKTNYGKFYTGDSFIVLNTIENKKDKKLSWDVHFWLGLETSTDEAG. The residue at position 90 (Tyr-90) is a Phosphotyrosine; by SRC. The interval 128-131 is actin-actin interfilament contact point; sequence DEAG. A 1,2-diacyl-sn-glycero-3-phospho-(1D-myo-inositol-4,5-bisphosphate)-binding positions include 167-174 and 193-201; these read KNGIRYEQ and RLFQVKGKR. Gelsolin-like repeat units lie at residues 203 to 243, 322 to 365, 474 to 524, and 583 to 625; these read VRVR…VEKL, LKVD…KEKT, IVVS…AARK, and VHAS…FEKQ. The actin-binding, Ca-sensitive stretch occupies residues 451-792; the sequence is MPDHGQNVIE…SYEDMKQLVI (342 aa). Residue Asp-599 participates in Ca(2+) binding. At Tyr-612 the chain carries Phosphotyrosine; by SRC. Glu-623 contributes to the Ca(2+) binding site. Tyr-662 is subject to Phosphotyrosine; by SRC. Residues 689-730 form a Gelsolin-like 6 repeat; that stretch reads LKVEEVAQYEQEDLDSDDIMLLDAGDEIYLWVGYGVSEEENG. Positions 705, 706, and 728 each coordinate Ca(2+).

It belongs to the villin/gelsolin family. In terms of assembly, binds to actin and to fibronectin. As to expression, isoform 1 and isoform 2 are ubiquitously expressed in early embryo. Isoform 1 is expressed in the fat body, and is abundant in hemolymph. Isoform 2 is expressed in parts of the gut.

The protein resides in the cytoplasm. The protein localises to the cytoskeleton. It localises to the secreted. Functionally, calcium-regulated, actin-modulating protein that binds to the plus (or barbed) ends of actin monomers or filaments, preventing monomer exchange (end-blocking or capping). It can promote the assembly of monomers into filaments (nucleation) as well as sever filaments already formed. The polypeptide is Gelsolin (Gel) (Drosophila melanogaster (Fruit fly)).